The following is a 348-amino-acid chain: Cyclin-dependent kinase inhibitor 1C (348 aa).

R109 is subject to Omega-N-methylarginine. Positions 115–348 (VAVIPRSGPP…VEQTPRKRLR (234 aa)) are disordered. Acidic residues-rich tracts occupy residues 207-220 (QGEE…DELG) and 227-274 (QGEE…QDEN). Over residues 275-284 (QEQRGQELKD) the composition is skewed to basic and acidic residues. The short motif at 309-312 (KRKR) is the Nuclear localization signal element.

It belongs to the CDI family. In terms of assembly, interacts with PCNA. Expressed in the heart, brain, lung, skeletal muscle, kidney, pancreas and testis. High levels are seen in the placenta while low levels are seen in the liver.

Its subcellular location is the nucleus. Functionally, potent tight-binding inhibitor of several G1 cyclin/CDK complexes (cyclin E-CDK2, cyclin D2-CDK4, and cyclin A-CDK2) and, to lesser extent, of the mitotic cyclin B-CDC2. Negative regulator of cell proliferation. May play a role in maintenance of the non-proliferative state throughout life. This is Cyclin-dependent kinase inhibitor 1C (Cdkn1c) from Mus musculus (Mouse).